The sequence spans 153 residues: Large ribosomal subunit protein uL15 (153 aa).

The interval 21–41 (RGIGSGKGKTGGRGIKGQKSR) is disordered. Residues 23-35 (IGSGKGKTGGRGI) are compositionally biased toward gly residues.

It belongs to the universal ribosomal protein uL15 family. As to quaternary structure, part of the 50S ribosomal subunit.

Binds to the 23S rRNA. This is Large ribosomal subunit protein uL15 from Rickettsia africae (strain ESF-5).